Reading from the N-terminus, the 173-residue chain is Crossover junction endodeoxyribonuclease RuvC (173 aa).

Catalysis depends on residues Asp-8, Glu-69, and Asp-141. Asp-8, Glu-69, and Asp-141 together coordinate Mg(2+).

The protein belongs to the RuvC family. In terms of assembly, homodimer which binds Holliday junction (HJ) DNA. The HJ becomes 2-fold symmetrical on binding to RuvC with unstacked arms; it has a different conformation from HJ DNA in complex with RuvA. In the full resolvosome a probable DNA-RuvA(4)-RuvB(12)-RuvC(2) complex forms which resolves the HJ. Requires Mg(2+) as cofactor.

The protein localises to the cytoplasm. The catalysed reaction is Endonucleolytic cleavage at a junction such as a reciprocal single-stranded crossover between two homologous DNA duplexes (Holliday junction).. Its function is as follows. The RuvA-RuvB-RuvC complex processes Holliday junction (HJ) DNA during genetic recombination and DNA repair. Endonuclease that resolves HJ intermediates. Cleaves cruciform DNA by making single-stranded nicks across the HJ at symmetrical positions within the homologous arms, yielding a 5'-phosphate and a 3'-hydroxyl group; requires a central core of homology in the junction. The consensus cleavage sequence is 5'-(A/T)TT(C/G)-3'. Cleavage occurs on the 3'-side of the TT dinucleotide at the point of strand exchange. HJ branch migration catalyzed by RuvA-RuvB allows RuvC to scan DNA until it finds its consensus sequence, where it cleaves and resolves the cruciform DNA. The protein is Crossover junction endodeoxyribonuclease RuvC of Xylella fastidiosa (strain 9a5c).